Consider the following 448-residue polypeptide: Probable rhamnogalacturonase E (448 aa).

Positions 1-22 are cleaved as a signal peptide; that stretch reads MTWSTSFLVATSLLSIINSVHA. Cys43 and Cys69 are oxidised to a cystine. N-linked (GlcNAc...) asparagine glycosylation is found at Asn54, Asn92, and Asn131. Residue Asp221 is the Proton donor of the active site. A disulfide bridge connects residues Cys223 and Cys240. Residues Asn256 and Asn284 are each glycosylated (N-linked (GlcNAc...) asparagine). Residue His296 is part of the active site. 2 N-linked (GlcNAc...) asparagine glycosylation sites follow: Asn323 and Asn328. Intrachain disulfides connect Cys346–Cys352 and Cys374–Cys382.

This sequence belongs to the glycosyl hydrolase 28 family.

It localises to the secreted. In terms of biological role, pectinolytic enzymes consist of four classes of enzymes: pectine lyase, polygalacturonase, pectin methylesterase and rhamnogalacturonase. Hydrolyzes alpha-D-galacturonopyranosyl-(1,2)-alpha-L-rhamnopyranosyl linkages in the backbone of the hairy regions of pectins. In Aspergillus niger (strain ATCC MYA-4892 / CBS 513.88 / FGSC A1513), this protein is Probable rhamnogalacturonase E (rhgE).